A 259-amino-acid chain; its full sequence is Trans-aconitate 2-methyltransferase (259 aa).

This sequence belongs to the methyltransferase superfamily. Tam family.

The protein resides in the cytoplasm. It catalyses the reaction trans-aconitate + S-adenosyl-L-methionine = (E)-3-(methoxycarbonyl)pent-2-enedioate + S-adenosyl-L-homocysteine. In terms of biological role, catalyzes the S-adenosylmethionine monomethyl esterification of trans-aconitate. The polypeptide is Trans-aconitate 2-methyltransferase (Variovorax paradoxus (strain S110)).